Here is a 943-residue protein sequence, read N- to C-terminus: Protein translocase subunit SecA (943 aa).

Residues glutamine 90, 108 to 112, and aspartate 509 contribute to the ATP site; that span reads GEGKT. The interval 534-561 is disordered; it reads KPDNEHKPPIPQQRNSKSGGGFSANVDS.

The protein belongs to the SecA family. In terms of assembly, monomer and homodimer. Part of the essential Sec protein translocation apparatus which comprises SecA, SecYEG and auxiliary proteins SecDF. Other proteins may also be involved.

The protein resides in the cell inner membrane. The protein localises to the cellular thylakoid membrane. Its subcellular location is the cytoplasm. It catalyses the reaction ATP + H2O + cellular proteinSide 1 = ADP + phosphate + cellular proteinSide 2.. Functionally, part of the Sec protein translocase complex. Interacts with the SecYEG preprotein conducting channel. Has a central role in coupling the hydrolysis of ATP to the transfer of proteins into and across the cell membrane, serving as an ATP-driven molecular motor driving the stepwise translocation of polypeptide chains across the membrane. Its function is as follows. Probably participates in protein translocation into and across both the cytoplasmic and thylakoid membranes in cyanobacterial cells. This is Protein translocase subunit SecA from Prochlorococcus marinus subsp. pastoris (strain CCMP1986 / NIES-2087 / MED4).